A 288-amino-acid polypeptide reads, in one-letter code: Syntaxin-1B (288 aa).

Residues 1-13 (MKDRTQELRSAKD) are compositionally biased toward basic and acidic residues. The disordered stretch occupies residues 1-20 (MKDRTQELRSAKDSDDEEEV). Over 1 to 264 (MKDRTQELRS…KYQSKARRKK (264 aa)) the chain is Cytoplasmic. A phosphoserine mark is found at S10 and S14. Residues 29–104 (MDEFFEQVEE…IEQSIEQEEG (76 aa)) adopt a coiled-coil conformation. The 63-residue stretch at 191 to 253 (LNEIETRHNE…ERAVSDTKKA (63 aa)) folds into the t-SNARE coiled-coil homology domain. Residues 265 to 288 (IMIIICCVVLGVVLASSIGGTLGL) form a helical; Anchor for type IV membrane protein membrane-spanning segment.

Belongs to the syntaxin family. In terms of assembly, interacts with OTOF. Interacts with SYT6 and SYT8; the interaction is Ca(2+)-dependent. Phosphorylated by CK2.

The protein localises to the membrane. It localises to the nucleus. It is found in the cytoplasm. Its subcellular location is the cytoskeleton. The protein resides in the microtubule organizing center. The protein localises to the centrosome. It localises to the spindle. Potentially involved in docking of synaptic vesicles at presynaptic active zones. May mediate Ca(2+)-regulation of exocytosis acrosomal reaction in sperm. The polypeptide is Syntaxin-1B (STX1B) (Homo sapiens (Human)).